The chain runs to 421 residues: Leucine-rich repeat-containing protein 42 (421 aa).

LRR repeat units follow at residues Val-149–Lys-170, Glu-174–Leu-195, Ser-202–Thr-222, Asn-234–Phe-255, and Lys-259–Leu-280. The disordered stretch occupies residues Pro-376 to Lys-406. The segment covering Glu-396–Lys-406 has biased composition (low complexity). Position 399 is a phosphoserine (Ser-399).

This sequence belongs to the LRRC42 family.

The protein is Leucine-rich repeat-containing protein 42 (Lrrc42) of Mus musculus (Mouse).